The chain runs to 77 residues: Secapin-2 (77 aa).

The N-terminal stretch at 1 to 32 is a signal peptide; sequence MKNYSKNATYLITVLLFSFVTMLLIIPSKCEA. A propeptide spanning residues 33–52 is cleaved from the precursor; it reads VSNDMQPLEARTADLVQQPR. A disulfide bond links cysteine 61 and cysteine 72. Proline 77 carries the proline amide modification.

The protein belongs to the secapin family. As to expression, expressed by the venom gland.

Its subcellular location is the secreted. Functionally, serine protease inhibitor which exhibits antifibrinolytic, antielastolytic and antimicrobial activities. Displays antimicrobial activity against bacteria and fungi. Likely functions in the innate immune response to microbial infection and possibly in the venom, as an antifibrinolytic agent. Induces hyperalgesia and edema mediated by leukotrienes when injected into mice. Does not induce hemolytic activity, mast cell degranulation, or chemotactic activity for polymorphonucleated leukocytes (PMNL). This Apis mellifera (Honeybee) protein is Secapin-2.